The following is a 373-amino-acid chain: Glutamine synthetase (373 aa).

At A2 the chain carries N-acetylalanine. The required for glutamine-induced ubiquitination by CRL4(CRBN) and proteasomal degradation stretch occupies residues 2–25 (ATSASSHLNKGIKQVYMSLPQGEK). An N6-acetyllysine mark is found at K11 and K14. The region spanning 24-106 (EKVQAMYIWI…VFCEVFKYNR (83 aa)) is the GS beta-grasp domain. Y104 carries the post-translational modification Phosphotyrosine. A GS catalytic domain is found at 113–373 (LRHTCKRIMD…TGDEPFQYKN (261 aa)). E134 serves as a coordination point for ATP. Positions 134, 136, 196, and 203 each coordinate Mn(2+). Position 203–208 (203–208 (EFQIGP)) interacts with ATP. Residue 246–247 (NW) coordinates L-glutamate. H253 contacts Mn(2+). Residues 255 to 257 (NFS), R319, and R324 each bind ATP. An L-glutamate-binding site is contributed by R319. ADP is bound at residue 336 to 338 (YFE). Mn(2+) is bound at residue E338. R340 is an L-glutamate binding site. A Phosphoserine modification is found at S343.

It belongs to the glutamine synthetase family. Decamer; composed of two pentamers. Interacts with PALMD. Interacts with RHOJ. Interacts with BEST2; this interaction tethers a fraction of GLUL to the membrane, causing a decrease of cytosolic glutamine synthase (GS) activity and inhibits the chloride channel activity of BEST2 by affecting the gating at the aperture in the absence of intracellular glutamate. Mg(2+) is required as a cofactor. The cofactor is Mn(2+). In terms of processing, palmitoylated; undergoes autopalmitoylation. Post-translationally, acetylated by EP300/p300; acetylation is stimulated by increased glutamine levels and promotes ubiquitin-mediated proteasomal degradation. Ubiquitinated by ZNRF1. Ubiquitinated by the DCX (DDB1-CUL4-X-box) E3 ubiquitin-protein ligase complex called CRL4(CRBN), leading to proteasomal degradation.

Its subcellular location is the cytoplasm. The protein resides in the cytosol. It localises to the microsome. The protein localises to the mitochondrion. It is found in the cell membrane. The catalysed reaction is L-glutamate + NH4(+) + ATP = L-glutamine + ADP + phosphate + H(+). It carries out the reaction L-cysteinyl-[protein] + hexadecanoyl-CoA = S-hexadecanoyl-L-cysteinyl-[protein] + CoA. Its activity is regulated as follows. Glutamine synthetase activity is inhibited by methionine sulfoximine (MSO). In terms of biological role, glutamine synthetase that catalyzes the ATP-dependent conversion of glutamate and ammonia to glutamine. Its role depends on tissue localization: in the brain, it regulates the levels of toxic ammonia and converts neurotoxic glutamate to harmless glutamine, whereas in the liver, it is one of the enzymes responsible for the removal of ammonia. Plays a key role in ammonium detoxification during erythropoiesis: the glutamine synthetase activity is required to remove ammonium generated by porphobilinogen deaminase (HMBS) during heme biosynthesis to prevent ammonium accumulation and oxidative stress. Essential for proliferation of fetal skin fibroblasts. Independently of its glutamine synthetase activity, required for endothelial cell migration during vascular development. Involved in angiogenesis by regulating membrane localization and activation of the GTPase RHOJ, possibly by promoting RHOJ palmitoylation. May act as a palmitoyltransferase for RHOJ: able to autopalmitoylate and then transfer the palmitoyl group to RHOJ. Plays a role in ribosomal 40S subunit biogenesis. Through the interaction with BEST2, inhibits BEST2 channel activity by affecting the gating at the aperture in the absence of intracellular L-glutamate, but sensitizes BEST2 to intracellular L-glutamate, which promotes the opening of BEST2 and thus relieves its inhibitory effect on BEST2. This is Glutamine synthetase from Canis lupus familiaris (Dog).